The chain runs to 323 residues: ATP synthase gamma chain (323 aa).

It belongs to the ATPase gamma chain family. F-type ATPases have 2 components, CF(1) - the catalytic core - and CF(0) - the membrane proton channel. CF(1) has five subunits: alpha(3), beta(3), gamma(1), delta(1), epsilon(1). CF(0) has three main subunits: a, b and c.

Its subcellular location is the cell membrane. Functionally, produces ATP from ADP in the presence of a proton gradient across the membrane. The gamma chain is believed to be important in regulating ATPase activity and the flow of protons through the CF(0) complex. This Nocardia farcinica (strain IFM 10152) protein is ATP synthase gamma chain.